The following is a 159-amino-acid chain: 17 kDa surface antigen (159 aa).

The N-terminal stretch at 1-19 (MKLLSKIMIIALAASMLQA) is a signal peptide. A lipid anchor (N-palmitoyl cysteine) is attached at C20. A lipid anchor (S-diacylglycerol cysteine) is attached at C20.

This sequence belongs to the rickettsiale 17 kDa surface antigen family.

The protein resides in the cell outer membrane. The chain is 17 kDa surface antigen (omp) from Rickettsia felis (strain ATCC VR-1525 / URRWXCal2) (Rickettsia azadi).